Here is a 307-residue protein sequence, read N- to C-terminus: MGEQNHSPGKELQHRTRAEAPGKKSWHSQAYALGAVSNFMSTFLTFPIYKVVFRQQIHAMAVSEAVRQLWHEGPQYFYRGIYPPLLSKTLQGTLLFGTYDSLLCFLSPVGPHTLGHRWAAGLMSGVVEAVALSPFERVQNVLQDGRKQARFPSTFSILKEFNSYGLWGRLSLGYYRGFWPVLARNSLGSALYFSFKDPIQDGLAEQGLPHWVPALVSGSVNGTITCLVLYPLIVLVANMQSHIGWQNMPSLWASAQDVWNTRGRKLLLIYRGGSLVILRSSVTWGLTTAIHDFLQRKSHSRKELKTD.

A disordered region spans residues 1 to 23 (MGEQNHSPGKELQHRTRAEAPGK). The span at 8-22 (PGKELQHRTRAEAPG) shows a compositional bias: basic and acidic residues. 3 Solcar repeats span residues 25–105 (SWHS…LLCF), 112–202 (HTLG…IQDG), and 210–302 (HWVP…HSRK). Helical transmembrane passes span 31–51 (YALG…IYKV), 82–102 (YPPL…YDSL), 112–132 (HTLG…AVAL), 181–201 (VLAR…PIQD), 215–235 (LVSG…LIVL), and 269–290 (IYRG…TTAI).

Belongs to the mitochondrial carrier (TC 2.A.29) family.

The protein resides in the mitochondrion inner membrane. The protein is Solute carrier family 25 member 53 (SLC25A53) of Homo sapiens (Human).